The chain runs to 302 residues: uncharacterized protein (302 aa).

This is an uncharacterized protein from Ictaluridae (bullhead catfishes).